The chain runs to 424 residues: Endo-beta-1,4-galactanase (424 aa).

The N-terminal stretch at 1–26 (MKNVLAVFVVLIFVLGAFGTSGPAEA) is a signal peptide. Residue 142–145 (DPAK) participates in substrate binding. Catalysis depends on Glu190, which acts as the Proton donor. Substrate-binding positions include 229–230 (TN) and His263. Catalysis depends on Glu288, which acts as the Nucleophile. Residue Thr292 participates in substrate binding. Ca(2+)-binding residues include Asp297, Asp299, His301, and Asn303. Residues Lys307 and Asp384 each coordinate substrate. Ca(2+) is bound by residues Ser392 and Asp395.

It belongs to the glycosyl hydrolase 53 family. Ca(2+) is required as a cofactor.

The enzyme catalyses The enzyme specifically hydrolyzes (1-&gt;4)-beta-D-galactosidic linkages in type I arabinogalactans.. In terms of biological role, involved in galactan degradation. Degrades arabinose-free galactan to galactooligosaccharides, producing galactotetraose as the main product along with galactotriose, galactobiose, and galactose. May hydrolyze the beta-1,4-galactan linkages of the galactan portion of arabinogalactan type I, a pectic plant polysaccharide from which most of the arabinose has been removed. The chain is Endo-beta-1,4-galactanase (ganB) from Bacillus licheniformis (strain ATCC 14580 / DSM 13 / JCM 2505 / CCUG 7422 / NBRC 12200 / NCIMB 9375 / NCTC 10341 / NRRL NRS-1264 / Gibson 46).